Here is a 431-residue protein sequence, read N- to C-terminus: Serine hydroxymethyltransferase 2 (431 aa).

(6S)-5,6,7,8-tetrahydrofolate is bound by residues Leu131 and 135–137 (GHL). Lys240 is subject to N6-(pyridoxal phosphate)lysine.

It belongs to the SHMT family. In terms of assembly, homodimer. It depends on pyridoxal 5'-phosphate as a cofactor.

It is found in the cytoplasm. It carries out the reaction (6R)-5,10-methylene-5,6,7,8-tetrahydrofolate + glycine + H2O = (6S)-5,6,7,8-tetrahydrofolate + L-serine. The protein operates within one-carbon metabolism; tetrahydrofolate interconversion. It functions in the pathway amino-acid biosynthesis; glycine biosynthesis; glycine from L-serine: step 1/1. Functionally, catalyzes the reversible interconversion of serine and glycine with tetrahydrofolate (THF) serving as the one-carbon carrier. This reaction serves as the major source of one-carbon groups required for the biosynthesis of purines, thymidylate, methionine, and other important biomolecules. Also exhibits THF-independent aldolase activity toward beta-hydroxyamino acids, producing glycine and aldehydes, via a retro-aldol mechanism. The chain is Serine hydroxymethyltransferase 2 from Vibrio parahaemolyticus serotype O3:K6 (strain RIMD 2210633).